The chain runs to 244 residues: 1-(5-phosphoribosyl)-5-[(5-phosphoribosylamino)methylideneamino] imidazole-4-carboxamide isomerase (244 aa).

Catalysis depends on Asp9, which acts as the Proton acceptor. Asp131 acts as the Proton donor in catalysis.

This sequence belongs to the HisA/HisF family.

It is found in the cytoplasm. The catalysed reaction is 1-(5-phospho-beta-D-ribosyl)-5-[(5-phospho-beta-D-ribosylamino)methylideneamino]imidazole-4-carboxamide = 5-[(5-phospho-1-deoxy-D-ribulos-1-ylimino)methylamino]-1-(5-phospho-beta-D-ribosyl)imidazole-4-carboxamide. Its pathway is amino-acid biosynthesis; L-histidine biosynthesis; L-histidine from 5-phospho-alpha-D-ribose 1-diphosphate: step 4/9. The chain is 1-(5-phosphoribosyl)-5-[(5-phosphoribosylamino)methylideneamino] imidazole-4-carboxamide isomerase from Campylobacter jejuni subsp. doylei (strain ATCC BAA-1458 / RM4099 / 269.97).